A 483-amino-acid chain; its full sequence is Phosphoenolpyruvate carboxylase (483 aa).

The segment at 1-20 (MKVPRCMSTQHPDNVNPPFF) is disordered.

Belongs to the PEPCase type 2 family. In terms of assembly, homotetramer. It depends on Mg(2+) as a cofactor.

It carries out the reaction oxaloacetate + phosphate = phosphoenolpyruvate + hydrogencarbonate. Its activity is regulated as follows. Inhibited by NaCl, KCl, ATP, ADP, GTP and aspartate. Unlike E.coli, not regulated by acetyl-CoA. Its function is as follows. Catalyzes the irreversible beta-carboxylation of phosphoenolpyruvate (PEP) to form oxaloacetate (OAA), a four-carbon dicarboxylic acid source for the tricarboxylic acid cycle. The protein is Phosphoenolpyruvate carboxylase (ppcA) of Methanothermobacter thermautotrophicus (strain ATCC 29096 / DSM 1053 / JCM 10044 / NBRC 100330 / Delta H) (Methanobacterium thermoautotrophicum).